The following is a 456-amino-acid chain: Bifunctional protein GlmU (456 aa).

A pyrophosphorylase region spans residues M1–R229. UDP-N-acetyl-alpha-D-glucosamine-binding positions include L7–G10, K21, Q73, G78–T79, Y103–D105, G139, E154, N169, and N227. D105 serves as a coordination point for Mg(2+). N227 contributes to the Mg(2+) binding site. A linker region spans residues V230 to A250. An N-acetyltransferase region spans residues G251–S456. 2 residues coordinate UDP-N-acetyl-alpha-D-glucosamine: R333 and K351. Catalysis depends on H363, which acts as the Proton acceptor. UDP-N-acetyl-alpha-D-glucosamine-binding residues include Y366 and N377. Acetyl-CoA is bound by residues A380, N386–Y387, S405, A423, and R440.

In the N-terminal section; belongs to the N-acetylglucosamine-1-phosphate uridyltransferase family. It in the C-terminal section; belongs to the transferase hexapeptide repeat family. In terms of assembly, homotrimer. It depends on Mg(2+) as a cofactor.

The protein resides in the cytoplasm. The enzyme catalyses alpha-D-glucosamine 1-phosphate + acetyl-CoA = N-acetyl-alpha-D-glucosamine 1-phosphate + CoA + H(+). The catalysed reaction is N-acetyl-alpha-D-glucosamine 1-phosphate + UTP + H(+) = UDP-N-acetyl-alpha-D-glucosamine + diphosphate. Its pathway is nucleotide-sugar biosynthesis; UDP-N-acetyl-alpha-D-glucosamine biosynthesis; N-acetyl-alpha-D-glucosamine 1-phosphate from alpha-D-glucosamine 6-phosphate (route II): step 2/2. The protein operates within nucleotide-sugar biosynthesis; UDP-N-acetyl-alpha-D-glucosamine biosynthesis; UDP-N-acetyl-alpha-D-glucosamine from N-acetyl-alpha-D-glucosamine 1-phosphate: step 1/1. It functions in the pathway bacterial outer membrane biogenesis; LPS lipid A biosynthesis. Its function is as follows. Catalyzes the last two sequential reactions in the de novo biosynthetic pathway for UDP-N-acetylglucosamine (UDP-GlcNAc). The C-terminal domain catalyzes the transfer of acetyl group from acetyl coenzyme A to glucosamine-1-phosphate (GlcN-1-P) to produce N-acetylglucosamine-1-phosphate (GlcNAc-1-P), which is converted into UDP-GlcNAc by the transfer of uridine 5-monophosphate (from uridine 5-triphosphate), a reaction catalyzed by the N-terminal domain. The chain is Bifunctional protein GlmU from Bordetella petrii (strain ATCC BAA-461 / DSM 12804 / CCUG 43448).